Consider the following 521-residue polypeptide: GMP synthase [glutamine-hydrolyzing] (521 aa).

The Glutamine amidotransferase type-1 domain maps to 8–203 (KILILDFGAQ…VVDVCGCQTL (196 aa)). The active-site Nucleophile is the C85. Active-site residues include H177 and E179. Positions 204 to 396 (WTAANIIDDQ…LGLPRTMVYR (193 aa)) constitute a GMPS ATP-PPase domain. 231–237 (SGGVDSS) is an ATP binding site.

In terms of assembly, homodimer.

The enzyme catalyses XMP + L-glutamine + ATP + H2O = GMP + L-glutamate + AMP + diphosphate + 2 H(+). It functions in the pathway purine metabolism; GMP biosynthesis; GMP from XMP (L-Gln route): step 1/1. Its function is as follows. Catalyzes the synthesis of GMP from XMP. The chain is GMP synthase [glutamine-hydrolyzing] from Xanthomonas campestris pv. campestris (strain B100).